We begin with the raw amino-acid sequence, 273 residues long: 4-hydroxy-tetrahydrodipicolinate reductase (273 aa).

NAD(+)-binding positions include 11–16 (GALGRM) and 106–108 (GTT). H162 (proton donor/acceptor) is an active-site residue. H163 provides a ligand contact to (S)-2,3,4,5-tetrahydrodipicolinate. The Proton donor role is filled by K166. 172–173 (GT) contributes to the (S)-2,3,4,5-tetrahydrodipicolinate binding site.

Belongs to the DapB family.

The protein localises to the cytoplasm. It carries out the reaction (S)-2,3,4,5-tetrahydrodipicolinate + NAD(+) + H2O = (2S,4S)-4-hydroxy-2,3,4,5-tetrahydrodipicolinate + NADH + H(+). It catalyses the reaction (S)-2,3,4,5-tetrahydrodipicolinate + NADP(+) + H2O = (2S,4S)-4-hydroxy-2,3,4,5-tetrahydrodipicolinate + NADPH + H(+). Its pathway is amino-acid biosynthesis; L-lysine biosynthesis via DAP pathway; (S)-tetrahydrodipicolinate from L-aspartate: step 4/4. Functionally, catalyzes the conversion of 4-hydroxy-tetrahydrodipicolinate (HTPA) to tetrahydrodipicolinate. The sequence is that of 4-hydroxy-tetrahydrodipicolinate reductase from Synechococcus sp. (strain RCC307).